Here is a 350-residue protein sequence, read N- to C-terminus: Hydroxymethylglutaryl-CoA synthase (350 aa).

Residues Asp-33 and Val-34 each contribute to the (3S)-3-hydroxy-3-methylglutaryl-CoA site. Residue Glu-85 is the Proton donor/acceptor of the active site. (3S)-3-hydroxy-3-methylglutaryl-CoA-binding residues include Cys-117 and Thr-158. The active-site Acyl-thioester intermediate is the Cys-117. Arg-204 contributes to the CoA binding site. Residues Thr-206 and His-239 each contribute to the (3S)-3-hydroxy-3-methylglutaryl-CoA site. The active-site Proton donor/acceptor is His-239. Lys-244 is a CoA binding site. Residues Lys-248, Asn-271, and Ser-301 each contribute to the (3S)-3-hydroxy-3-methylglutaryl-CoA site.

This sequence belongs to the thiolase-like superfamily. Archaeal HMG-CoA synthase family. As to quaternary structure, interacts with acetoacetyl-CoA thiolase that catalyzes the precedent step in the pathway and with a DUF35 protein. The acetoacetyl-CoA thiolase/HMG-CoA synthase complex channels the intermediate via a fused CoA-binding site, which allows for efficient coupling of the endergonic thiolase reaction with the exergonic HMGCS reaction.

It catalyses the reaction acetoacetyl-CoA + acetyl-CoA + H2O = (3S)-3-hydroxy-3-methylglutaryl-CoA + CoA + H(+). The protein operates within metabolic intermediate biosynthesis; (R)-mevalonate biosynthesis; (R)-mevalonate from acetyl-CoA: step 2/3. Functionally, catalyzes the condensation of acetyl-CoA with acetoacetyl-CoA to form 3-hydroxy-3-methylglutaryl-CoA (HMG-CoA). Functions in the mevalonate (MVA) pathway leading to isopentenyl diphosphate (IPP), a key precursor for the biosynthesis of isoprenoid compounds that are building blocks of archaeal membrane lipids. This Methanopyrus kandleri (strain AV19 / DSM 6324 / JCM 9639 / NBRC 100938) protein is Hydroxymethylglutaryl-CoA synthase.